The primary structure comprises 163 residues: Crossover junction endodeoxyribonuclease RuvC (163 aa).

Catalysis depends on residues aspartate 9, glutamate 76, and aspartate 148. 3 residues coordinate Mg(2+): aspartate 9, glutamate 76, and aspartate 148.

Belongs to the RuvC family. Homodimer which binds Holliday junction (HJ) DNA. The HJ becomes 2-fold symmetrical on binding to RuvC with unstacked arms; it has a different conformation from HJ DNA in complex with RuvA. In the full resolvosome a probable DNA-RuvA(4)-RuvB(12)-RuvC(2) complex forms which resolves the HJ. It depends on Mg(2+) as a cofactor.

The protein resides in the cytoplasm. The enzyme catalyses Endonucleolytic cleavage at a junction such as a reciprocal single-stranded crossover between two homologous DNA duplexes (Holliday junction).. The RuvA-RuvB-RuvC complex processes Holliday junction (HJ) DNA during genetic recombination and DNA repair. Endonuclease that resolves HJ intermediates. Cleaves cruciform DNA by making single-stranded nicks across the HJ at symmetrical positions within the homologous arms, yielding a 5'-phosphate and a 3'-hydroxyl group; requires a central core of homology in the junction. The consensus cleavage sequence is 5'-(A/T)TT(C/G)-3'. Cleavage occurs on the 3'-side of the TT dinucleotide at the point of strand exchange. HJ branch migration catalyzed by RuvA-RuvB allows RuvC to scan DNA until it finds its consensus sequence, where it cleaves and resolves the cruciform DNA. In Trichormus variabilis (strain ATCC 29413 / PCC 7937) (Anabaena variabilis), this protein is Crossover junction endodeoxyribonuclease RuvC.